The following is a 251-amino-acid chain: Imidazole glycerol phosphate synthase subunit HisF (251 aa).

Active-site residues include Asp10 and Asp129.

The protein belongs to the HisA/HisF family. In terms of assembly, heterodimer of HisH and HisF.

It is found in the cytoplasm. It carries out the reaction 5-[(5-phospho-1-deoxy-D-ribulos-1-ylimino)methylamino]-1-(5-phospho-beta-D-ribosyl)imidazole-4-carboxamide + L-glutamine = D-erythro-1-(imidazol-4-yl)glycerol 3-phosphate + 5-amino-1-(5-phospho-beta-D-ribosyl)imidazole-4-carboxamide + L-glutamate + H(+). The protein operates within amino-acid biosynthesis; L-histidine biosynthesis; L-histidine from 5-phospho-alpha-D-ribose 1-diphosphate: step 5/9. In terms of biological role, IGPS catalyzes the conversion of PRFAR and glutamine to IGP, AICAR and glutamate. The HisF subunit catalyzes the cyclization activity that produces IGP and AICAR from PRFAR using the ammonia provided by the HisH subunit. The chain is Imidazole glycerol phosphate synthase subunit HisF from Cutibacterium acnes (strain DSM 16379 / KPA171202) (Propionibacterium acnes).